Consider the following 231-residue polypeptide: Octanoyltransferase (231 aa).

Residues 49–231 (SEAAEQVWLL…KRTFSEVFGS (183 aa)) form the BPL/LPL catalytic domain. Residues 87 to 94 (RGGQITYH), 162 to 164 (AIG), and 175 to 177 (GVS) each bind substrate. The active-site Acyl-thioester intermediate is C193.

The protein belongs to the LipB family.

It is found in the cytoplasm. The enzyme catalyses octanoyl-[ACP] + L-lysyl-[protein] = N(6)-octanoyl-L-lysyl-[protein] + holo-[ACP] + H(+). Its pathway is protein modification; protein lipoylation via endogenous pathway; protein N(6)-(lipoyl)lysine from octanoyl-[acyl-carrier-protein]: step 1/2. In terms of biological role, catalyzes the transfer of endogenously produced octanoic acid from octanoyl-acyl-carrier-protein onto the lipoyl domains of lipoate-dependent enzymes. Lipoyl-ACP can also act as a substrate although octanoyl-ACP is likely to be the physiological substrate. The chain is Octanoyltransferase from Nitrobacter winogradskyi (strain ATCC 25391 / DSM 10237 / CIP 104748 / NCIMB 11846 / Nb-255).